We begin with the raw amino-acid sequence, 1277 residues long: Clustered mitochondria protein 1 (1277 aa).

Disordered regions lie at residues leucine 19–lysine 39 and leucine 148–lysine 176. A compositionally biased stretch (basic residues) spans histidine 27–glutamine 36. Over residues isoleucine 153–lysine 176 the composition is skewed to basic and acidic residues. Residues proline 339–alanine 596 enclose the Clu domain. 3 TPR repeats span residues glycine 704–aspartate 738, alanine 1020–valine 1053, and glycine 1148–glutamine 1181. Residues leucine 1212–lysine 1277 are disordered. Basic and acidic residues predominate over residues lysine 1235 to aspartate 1249. Serine 1247 carries the post-translational modification Phosphoserine. A compositionally biased stretch (basic residues) spans serine 1264 to lysine 1277.

Belongs to the CLU family. May associate with the eukaryotic translation initiation factor 3 (eIF-3) complex. Associates with the 80S ribosome.

It localises to the cytoplasm. Its function is as follows. mRNA-binding protein involved in proper cytoplasmic distribution of mitochondria. The sequence is that of Clustered mitochondria protein 1 from Saccharomyces cerevisiae (strain ATCC 204508 / S288c) (Baker's yeast).